Consider the following 739-residue polypeptide: Lysyl oxidase homolog 3A (739 aa).

Residues 1 to 25 (MLRSELRDMVVAMVLWGILLPFCLS) form the signal peptide. SRCR domains are found at residues 38–139 (FRLA…VICK), 166–272 (LRPL…VSCV), 293–393 (MRLK…VICN), and 403–511 (MRLT…VICS). 12 cysteine pairs are disulfide-bonded: Cys-64/Cys-128, Cys-77/Cys-138, Cys-108/Cys-118, Cys-196/Cys-261, Cys-209/Cys-271, Cys-238/Cys-248, Cys-318/Cys-382, Cys-331/Cys-392, Cys-362/Cys-372, Cys-433/Cys-497, Cys-446/Cys-510, and Cys-479/Cys-489. The N-linked (GlcNAc...) asparagine glycan is linked to Asn-256. Residue Asn-468 is glycosylated (N-linked (GlcNAc...) asparagine). Asn-611 is a glycosylation site (N-linked (GlcNAc...) asparagine). Residues 620 to 656 (KASFCLEDTECHEGVSKRYECANFGEQGITVGCWDLY) constitute a cross-link (lysine tyrosylquinone (Lys-Tyr)). The residue at position 656 (Tyr-656) is a 2',4',5'-topaquinone.

This sequence belongs to the lysyl oxidase family. The cofactor is Cu cation. Lysine tyrosylquinone residue serves as cofactor. The lysine tyrosylquinone cross-link (LTQ) is generated by condensation of the epsilon-amino group of a lysine with a topaquinone produced by oxidation of tyrosine.

The protein resides in the secreted. It localises to the extracellular space. Its subcellular location is the cytoplasm. The protein localises to the nucleus. It carries out the reaction L-lysyl-[protein] + O2 + H2O = (S)-2-amino-6-oxohexanoyl-[protein] + H2O2 + NH4(+). The enzyme catalyses N(6)-acetyl-L-lysyl-[protein] + O2 + H2O = acetamide + (S)-2-amino-6-oxohexanoyl-[protein] + H2O2. Protein-lysine 6-oxidase that mediates the oxidation of peptidyl lysine residues to allysine in target proteins. Catalyzes the post-translational oxidative deamination of peptidyl lysine residues in precursors of elastin and different types of collagens, a prerequisite in the formation of cross-links between collagens and elastin. Can mediate oxidation of lysine residues that are acetylated. Also able to catalyze deacetylation of lysine residues. The polypeptide is Lysyl oxidase homolog 3A (Danio rerio (Zebrafish)).